We begin with the raw amino-acid sequence, 1164 residues long: Toxin subunit YenA1 (1164 aa).

Residues 106-131 form a disordered region; the sequence is RLEKSNSPLVPQTSSSTDASSESQTN. Residues 118-130 show a composition bias toward low complexity; sequence TSSSTDASSESQT.

As to quaternary structure, semipurified toxin complex consists of at least YenA1, YenA2, YenB, YenC1, YenC2, Chi1 and Chi2. The Yen-TC:K9 subcomplex is about 26 nm tall and 22 nm in diameter with 5-fold symmetry and 5 copies of YenA1, YenA2, Chi1 and Chi2; the chitinase subunits may be solvent accessible on the exterior the complex. The Yen-TC:K9 subcomplex has no insecticidal activity. The native complex with additional YenB, YenC1 and YenC2 subunits is 16 nm taller and is insecticidal; the toxicity-conferring subunits are present at about 1 copy each.

Its subcellular location is the secreted. Toxin complex is secreted when grown at 25 degrees Celsius or less; at higher temperatures the proteins are present intracellularly but not secreted. Functionally, part of an orally active toxin complex (TC) with strong insecticidal effects on larvae of the Coleoptera Costelytra zealandica, Acrossidius tasmania and Adoryphorus couloni and some Lepidoptera larvae. The TC has an endochitinase activity. The protein is Toxin subunit YenA1 of Yersinia entomophaga.